The following is a 95-amino-acid chain: Acylphosphatase (95 aa).

The Acylphosphatase-like domain maps to 5–93 (RAHVFIRGKV…GEFKDFKILP (89 aa)). Residues arginine 20 and asparagine 38 contribute to the active site.

Belongs to the acylphosphatase family.

It carries out the reaction an acyl phosphate + H2O = a carboxylate + phosphate + H(+). This Pyrobaculum aerophilum (strain ATCC 51768 / DSM 7523 / JCM 9630 / CIP 104966 / NBRC 100827 / IM2) protein is Acylphosphatase (acyP).